Here is a 524-residue protein sequence, read N- to C-terminus: MIKQALLSVSDKTGIVDFARELNALGVTLLSTGGTAKLLAEAGLPVTEVADYTGFPEMLDGRVKTLHPKVHGGILARRDLPEHMAALAEHNIPTIDLLVVNLYPFQQTVAKDDCTLPDAIENIDIGGPTMLRSAAKNHRDVTVIVDPADYAVVLGEMRANGNSVGYDTNFRLATKVFAHTAQYDGAITNYLTSLGADKSHQARSAYPQTLNLAFEKVQEMRYGENPHQSAAFYRDLKAFDGALANYVQLQGKELSYNNIADADAAWECVKSFDAANSAACVIIKHANPCGVAVGANALEAYDKAFKTDSTSAFGGIIAFNVELDEAAAQAVAKQFVEVLIAPSFSAAARNVFAAKQNVRLLEIPLGKGVNQYDLKRVGGGLLVQGPDARNVQPSELRVVTRRHPTPKEMDDLMFAWRVAKFVKSNAIVFCGNGMTLGVGAGQMSRVDSARIASIKAQNAGLTLAGSAVASDAFFPFRDGLDVVVDAGATCVIQPGGSMRDDEVIAAADERGIAMVLTGTRHFRH.

Residues 1–145 form the MGS-like domain; sequence MIKQALLSVS…KNHRDVTVIV (145 aa).

This sequence belongs to the PurH family.

It carries out the reaction (6R)-10-formyltetrahydrofolate + 5-amino-1-(5-phospho-beta-D-ribosyl)imidazole-4-carboxamide = 5-formamido-1-(5-phospho-D-ribosyl)imidazole-4-carboxamide + (6S)-5,6,7,8-tetrahydrofolate. The enzyme catalyses IMP + H2O = 5-formamido-1-(5-phospho-D-ribosyl)imidazole-4-carboxamide. It functions in the pathway purine metabolism; IMP biosynthesis via de novo pathway; 5-formamido-1-(5-phospho-D-ribosyl)imidazole-4-carboxamide from 5-amino-1-(5-phospho-D-ribosyl)imidazole-4-carboxamide (10-formyl THF route): step 1/1. The protein operates within purine metabolism; IMP biosynthesis via de novo pathway; IMP from 5-formamido-1-(5-phospho-D-ribosyl)imidazole-4-carboxamide: step 1/1. This is Bifunctional purine biosynthesis protein PurH from Cupriavidus metallidurans (strain ATCC 43123 / DSM 2839 / NBRC 102507 / CH34) (Ralstonia metallidurans).